The following is a 197-amino-acid chain: Probable GTP-binding protein EngB (197 aa).

In terms of domain architecture, EngB-type G spans 22–197; that stretch reads TGVEVAFAGR…FKEKLDTWYQ (176 aa). GTP is bound by residues 30-37, 57-61, 75-78, 142-145, and 177-179; these read GRSNAGKS, GRTQL, DLPG, TKAD, and FSS. Ser37 and Thr59 together coordinate Mg(2+).

This sequence belongs to the TRAFAC class TrmE-Era-EngA-EngB-Septin-like GTPase superfamily. EngB GTPase family. Mg(2+) serves as cofactor.

In terms of biological role, necessary for normal cell division and for the maintenance of normal septation. This Francisella tularensis subsp. tularensis (strain FSC 198) protein is Probable GTP-binding protein EngB.